A 282-amino-acid polypeptide reads, in one-letter code: Shikimate dehydrogenase (NADP(+)) (282 aa).

Shikimate-binding positions include 18–20 and threonine 65; that span reads SRS. The Proton acceptor role is filled by lysine 69. Position 81 (glutamate 81) interacts with NADP(+). Shikimate-binding residues include asparagine 90 and aspartate 105. Residues 130-134, 154-159, and methionine 222 contribute to the NADP(+) site; these read GAGGA and NRTPAR. Tyrosine 224 is a shikimate binding site. Glycine 245 is a binding site for NADP(+).

Belongs to the shikimate dehydrogenase family. As to quaternary structure, homodimer.

It carries out the reaction shikimate + NADP(+) = 3-dehydroshikimate + NADPH + H(+). It functions in the pathway metabolic intermediate biosynthesis; chorismate biosynthesis; chorismate from D-erythrose 4-phosphate and phosphoenolpyruvate: step 4/7. Involved in the biosynthesis of the chorismate, which leads to the biosynthesis of aromatic amino acids. Catalyzes the reversible NADPH linked reduction of 3-dehydroshikimate (DHSA) to yield shikimate (SA). The protein is Shikimate dehydrogenase (NADP(+)) of Acidovorax ebreus (strain TPSY) (Diaphorobacter sp. (strain TPSY)).